The sequence spans 700 residues: Elongation factor G (700 aa).

The 283-residue stretch at 8-290 (SLYRNIGISA…AVIDYLPAPT (283 aa)) folds into the tr-type G domain. Residues 17–24 (AHIDAGKT), 88–92 (DTPGH), and 142–145 (NKMD) contribute to the GTP site.

The protein belongs to the TRAFAC class translation factor GTPase superfamily. Classic translation factor GTPase family. EF-G/EF-2 subfamily.

Its subcellular location is the cytoplasm. Catalyzes the GTP-dependent ribosomal translocation step during translation elongation. During this step, the ribosome changes from the pre-translocational (PRE) to the post-translocational (POST) state as the newly formed A-site-bound peptidyl-tRNA and P-site-bound deacylated tRNA move to the P and E sites, respectively. Catalyzes the coordinated movement of the two tRNA molecules, the mRNA and conformational changes in the ribosome. The chain is Elongation factor G from Histophilus somni (strain 129Pt) (Haemophilus somnus).